A 312-amino-acid polypeptide reads, in one-letter code: Beta-ketoacyl-[acyl-carrier-protein] synthase III (312 aa).

Residues cysteine 112 and histidine 237 contribute to the active site. The ACP-binding stretch occupies residues 238–242; that stretch reads QANIR. The active site involves asparagine 267.

Belongs to the thiolase-like superfamily. FabH family. Homodimer.

The protein localises to the cytoplasm. It carries out the reaction malonyl-[ACP] + acetyl-CoA + H(+) = 3-oxobutanoyl-[ACP] + CO2 + CoA. The protein operates within lipid metabolism; fatty acid biosynthesis. Catalyzes the condensation reaction of fatty acid synthesis by the addition to an acyl acceptor of two carbons from malonyl-ACP. Catalyzes the first condensation reaction which initiates fatty acid synthesis and may therefore play a role in governing the total rate of fatty acid production. Possesses both acetoacetyl-ACP synthase and acetyl transacylase activities. Its substrate specificity determines the biosynthesis of branched-chain and/or straight-chain of fatty acids. The chain is Beta-ketoacyl-[acyl-carrier-protein] synthase III from Listeria innocua serovar 6a (strain ATCC BAA-680 / CLIP 11262).